Reading from the N-terminus, the 429-residue chain is Homocysteine synthase (429 aa).

Position 210 is an N6-(pyridoxal phosphate)lysine (Lys210).

The protein belongs to the trans-sulfuration enzymes family. As to quaternary structure, homotetramer. The cofactor is pyridoxal 5'-phosphate.

It localises to the cytoplasm. The protein localises to the nucleus. It carries out the reaction O-acetyl-L-homoserine + methanethiol = L-methionine + acetate + H(+). The catalysed reaction is O-acetyl-L-homoserine + hydrogen sulfide = L-homocysteine + acetate. The protein operates within amino-acid biosynthesis; L-methionine biosynthesis via de novo pathway; L-homocysteine from O-acetyl-L-homoserine. Functionally, catalyzes the conversion of O-acetyl-L-homoserine (OAH) into homocysteine in the methionine biosynthesis pathway. Can also use O-succinyl-L-homoserine and L-homoserine as substrates. Also has cysteine synthase (O-acetylserine sulfhydrylase) activity in vitro, but in S.pombe, it seems only to be involved in the alternative pathway of methionine biosynthesis under cysteine deficiency conditions. This Schizosaccharomyces pombe (strain 972 / ATCC 24843) (Fission yeast) protein is Homocysteine synthase.